The chain runs to 480 residues: Probable glycosyltransferase At5g25310 (480 aa).

At 1–10 (MDKFQSKFTR) the chain is on the cytoplasmic side. The helical; Signal-anchor for type II membrane protein transmembrane segment at 11–31 (FGFISICFGSIALVLLISHCS) threads the bilayer. At 32–480 (TSFFDYSFQK…WLRRLNLKLT (449 aa)) the chain is on the lumenal side. N-linked (GlcNAc...) asparagine glycans are attached at residues asparagine 85, asparagine 120, asparagine 243, asparagine 271, and asparagine 281.

The protein belongs to the glycosyltransferase 47 family.

The protein localises to the golgi apparatus membrane. Functionally, may be involved in cell wall biosynthesis. The protein is Probable glycosyltransferase At5g25310 of Arabidopsis thaliana (Mouse-ear cress).